The chain runs to 592 residues: AT-rich interactive domain-containing protein 5A (592 aa).

Positions 1–53 (MAPPVKGKRKQSEEGEPLDPPVSPQPDGEPRSRSPVRLEEPPEAGREREEEQE) are disordered. The interaction with SOX9 stretch occupies residues 1-299 (MAPPVKGKRK…AAPPLESPQS (299 aa)). Ser-23 carries the post-translational modification Phosphoserine. The span at 28–49 (GEPRSRSPVRLEEPPEAGRERE) shows a compositional bias: basic and acidic residues. Residues 52 to 144 (QEEEQAFLVS…LVLPYVRHLK (93 aa)) enclose the ARID domain. Glycyl lysine isopeptide (Lys-Gly) (interchain with G-Cter in ubiquitin) cross-links involve residues Lys-82 and Lys-91. The disordered stretch occupies residues 143–225 (LKGEDDKPLP…RGPAAGPSLP (83 aa)). A compositionally biased stretch (basic and acidic residues) spans 162-186 (MAKEPRGDDGATERPKKVKEEKRVD). Ser-253 carries the post-translational modification Phosphoserine. The tract at residues 277-333 (CRHGAGGEPQAPPAAPPLESPQSPGGPAEDSRHRLTPLEGRQAPGGGLWGETQAGPR) is disordered. A compositionally biased stretch (pro residues) spans 286 to 295 (QAPPAAPPLE). A phosphoserine mark is found at Ser-438 and Ser-463.

In terms of assembly, interacts with SOX9. Interacts with ESR1. Interacts with RORC. Post-translationally, phosphorylated by MAPK14 on serine residues involving a TLR4 signaling pathway upon lipopolysaccharide (LPS) stimulation leading to its ubiquitination and proteasomal degradation. Ubiquitinated leading to proteasomal degradation; involving WWP1 linked to MAPK14-mediated phosphorylation upon LPS stimulation.

The protein localises to the nucleus. DNA-binding protein that may regulate transcription and act as a repressor by binding to AT-rich stretches in the promoter region of target genes. May act as repressor and down-regulate enhancer-dependent gene expressison. May positively regulate chondrocyte-specific transcription such as of COL2A1 in collaboration with SOX9 and positively regulate histone H3 acetylation at chondrocyte-specific genes. May stimulate early-stage chondrocyte differentiation and inhibit later stage differention. Can repress ESR1-mediated transcriptional activation; proposed to act as corepressor for selective nuclear hormone receptors. As an RNA-binding protein, involved in the regulation of inflammatory response by stabilizing selective inflammation-related mRNAs, such as STAT3 and TBX21. Also stabilizes IL6 mRNA. Binds to stem loop structures located in the 3'UTRs of IL6, STAT3 and TBX21 mRNAs; at least for STAT3 prevents binding of ZC3H12A to the mRNA stem loop structure thus inhibiting its degradation activity. Contributes to elevated IL6 levels possibly implicated in autoimmunity processes. IL6-dependent stabilization of STAT3 mRNA may promote differentiation of naive CD4+ T-cells into T-helper Th17 cells. In CD4+ T-cells may also inhibit RORC-induced Th17 cell differentiation independently of IL6 signaling. Stabilization of TBX21 mRNA contributes to elevated interferon-gamma secretion in Th1 cells possibly implicated in the establishment of septic shock. Stabilizes TNFRSF4/OX40 mRNA by binding to the conserved stem loop structure in its 3'UTR; thereby competing with the mRNA-destabilizing functions of RC3H1 and endoribonuclease ZC3H12A. The polypeptide is AT-rich interactive domain-containing protein 5A (ARID5A) (Bos taurus (Bovine)).